The primary structure comprises 178 residues: Ribosome maturation factor RimP (178 aa).

The protein belongs to the RimP family.

The protein resides in the cytoplasm. Required for maturation of 30S ribosomal subunits. The chain is Ribosome maturation factor RimP from Streptococcus pyogenes serotype M1.